We begin with the raw amino-acid sequence, 129 residues long: uncharacterized protein (129 aa).

A helical transmembrane segment spans residues 46 to 66 (FFHFFFSFLLHLISPAVTGGI).

It localises to the membrane. This is an uncharacterized protein from Saccharomyces cerevisiae (strain ATCC 204508 / S288c) (Baker's yeast).